Reading from the N-terminus, the 579-residue chain is Protein alan shepard (579 aa).

The span at 1-12 (MHPRYSPAPPPQ) shows a compositional bias: pro residues. The disordered stretch occupies residues 1–66 (MHPRYSPAPP…GSSSSAAAAP (66 aa)). Position 5 is a phosphotyrosine (Tyr-5). The span at 13 to 24 (QQQQMGGPPHQQ) shows a compositional bias: low complexity. Positions 25–35 (QGGGGGGGGSM) are enriched in gly residues. A compositionally biased stretch (polar residues) spans 37-54 (GPSNAQQLPPQIPRSQNY). The span at 55–66 (SNGSSSSAAAAP) shows a compositional bias: low complexity. A phosphotyrosine mark is found at Tyr-125 and Tyr-142. Positions 164 to 225 (PATTTYGQRV…TVQNQNQQGG (62 aa)) are disordered. Positions 178–225 (SPSNTNSSSSSNTGSQSGTLSTSLSNTTNTNTNMGPNGTVQNQNQQGG) are enriched in low complexity. RRM domains lie at 231–304 (TNLY…MAKQ) and 310–389 (TNLY…FADG). The tract at residues 553-579 (MTDSEQASTAASPDEAYTQYPHQAAPK) is disordered.

Has a role in the perception of gravity. The chain is Protein alan shepard from Drosophila sechellia (Fruit fly).